Here is a 79-residue protein sequence, read N- to C-terminus: Ubiquinol-cytochrome c reductase complex assembly factor 5 (79 aa).

Residues 1–20 are Mitochondrial matrix-facing; sequence MSPYSGSVRRLLDSWPGKKR. A helical membrane pass occupies residues 21 to 43; the sequence is FGVYRFLPLFFLLGAGLEFSMIN. Residues 44-79 lie on the Mitochondrial intermembrane side of the membrane; sequence WTVGETNFYRTFKRRQAKNYVEEQQHLQARAANNTN.

The protein belongs to the UQCC5 family. In terms of assembly, interacts with respiratory complex III components Uqcc1 and RFeSP; the interactions are probably involved in the assembly and stability of the mitochondrial ubiquinol-cytochrome c reductase complex. Interacts with sloth2; the interaction stabilizes both components. Expressed in the brain.

It is found in the mitochondrion inner membrane. The protein resides in the mitochondrion. Required for the assembly and stability of the mitochondrial ubiquinol-cytochrome c reductase complex (complex III (CIII) or cytochrome b-c1 complex), a multisubunit transmembrane complex that is part of the mitochondrial electron transport chain (ETC) which drives oxidative phosphorylation. The protein is Ubiquinol-cytochrome c reductase complex assembly factor 5 of Drosophila melanogaster (Fruit fly).